The sequence spans 467 residues: Cysteine--tRNA ligase (467 aa).

Cys-30 contacts Zn(2+). The 'HIGH' region signature appears at 32-42 (PTVYNYIHIGN). Zn(2+) is bound by residues Cys-210, His-235, and Glu-239. Positions 267-271 (KMSKS) match the 'KMSKS' region motif. Position 270 (Lys-270) interacts with ATP. Ser-271 carries the post-translational modification Phosphoserine.

Belongs to the class-I aminoacyl-tRNA synthetase family. Monomer. Requires Zn(2+) as cofactor.

Its subcellular location is the cytoplasm. It carries out the reaction tRNA(Cys) + L-cysteine + ATP = L-cysteinyl-tRNA(Cys) + AMP + diphosphate. This Geobacillus thermodenitrificans (strain NG80-2) protein is Cysteine--tRNA ligase.